A 341-amino-acid polypeptide reads, in one-letter code: tRNA dimethylallyltransferase (341 aa).

15 to 22 (GPTAAGKT) contacts ATP. 17 to 22 (TAAGKT) is a binding site for substrate. Interaction with substrate tRNA stretches follow at residues 44–47 (DSAL), 168–172 (QRIQR), 253–258 (RCVGYR), and 302–309 (KRQITWLR).

Belongs to the IPP transferase family. In terms of assembly, monomer. It depends on Mg(2+) as a cofactor.

The enzyme catalyses adenosine(37) in tRNA + dimethylallyl diphosphate = N(6)-dimethylallyladenosine(37) in tRNA + diphosphate. Functionally, catalyzes the transfer of a dimethylallyl group onto the adenine at position 37 in tRNAs that read codons beginning with uridine, leading to the formation of N6-(dimethylallyl)adenosine (i(6)A). The protein is tRNA dimethylallyltransferase of Verminephrobacter eiseniae (strain EF01-2).